The following is a 225-amino-acid chain: PKHD-type hydroxylase YbiX (225 aa).

The Fe2OG dioxygenase domain maps to 78-177 (TLSTPLFNRY…RVASFMWIQS (100 aa)). Residues His96, Asp98, and His158 each contribute to the Fe cation site. Residue Arg168 participates in 2-oxoglutarate binding.

It depends on Fe(2+) as a cofactor. L-ascorbate is required as a cofactor.

The protein is PKHD-type hydroxylase YbiX of Escherichia coli (strain SMS-3-5 / SECEC).